The following is a 1120-amino-acid chain: MTMFQYYKRSRHFVFSAFIAFVFVLLCQNTAFARASSNGDLPTKADLQAQLDSLNKQKDLSAQDKLVQQDLTDTLATLDKIDRIKEETVQLRQKVAEAPEKMRQATAALTALSDVDNDEETRKILSTLSLRQLETRVAQALDDLQNAQNDLASYNSQLVSLQTQPERVQNAMYNASQQLQQIRSRLDGTDVGETALRPSQKVLMQAQQALLNAEIDQQRKSLEGNTVLQDTLQKQRDYVTANSARLEHQLQLLQEAVNSKRLTLTEKTAQEAVSPDEAARIQANPLVKQELEINQQLSQRLITATENGNQLMQQNIKVKNWLERALQSERNIKEQIAVLKGSLLLSRILYQQQQTLPSADELENMTNRIADLRLEQFEVNQQRDALFQSDAFVNKLEEGHTNEVNSEVHDALLQVVDMRRELLDQLNKQLGNQLMMAINLQINQQQLMSVSKNLKSILTQQIFWVNSNRPMDWDWIKAFPQSLKDEFKSMKITVNWQKAWPAVFIAFLAGLPLLLIAGLIHWRLGWLKAYQQKLASAVGSLRNDSQLNTPKAILIDLIRALPVCLIILAVGLILLTMQLNISELLWSFSKKLAIFWLVFGLCWKVLEKNGVAVRHFGMPEQQTSHWRRQIVRISLALLPIHFWSVVAELSPLHLMDDVLGQAMIFFNLLLIAFLVWPMCRESWRDKESHTMRLVTITVLSIIPIALMVLTATGYFYTTLRLAGRWIETVYLVIIWNLLYQTVLRGLSVAARRIAWRRALARRQNLVKEGAEGAEPPEEPTIALEQVNQQTLRITMLLMFALFGVMFWAIWSDLITVFSYLDSITLWHYNGTEAGAAVVKNVTMGSLLFAIIASMVAWALIRNLPGLLEVLVLSRLNMRQGASYAITTILNYIIIAVGAMTVFGSLGVSWDKLQWLAAALSVGLGFGLQEIFGNFVSGLIILFERPVRIGDTVTIGSFSGTVSKIRIRATTITDFDRKEVIIPNKAFVTERLINWSLTDTTTRLVIRLGVAYGSDLEKVRKVLLKAATEHPRVMHEPMPEVFFTAFGASTLDHELRLYVRELRDRSRTVDELNRTIDQLCRENDINIAFNQLEVHLHNEKGDEVTEVKRDYKGDDPTPAVG.

The N-terminal stretch at methionine 1–alanine 33 is a signal peptide. Topologically, residues arginine 34 to alanine 499 are periplasmic. 3 coiled-coil regions span residues threonine 43–alanine 98, serine 126–glutamate 266, and aspartate 360–leucine 422. Residues tryptophan 500–isoleucine 520 form a helical membrane-spanning segment. Over histidine 521–alanine 560 the chain is Cytoplasmic. Residues leucine 561–isoleucine 581 form a helical membrane-spanning segment. Position 582 (serine 582) is a topological domain, periplasmic. Residues glutamate 583–tryptophan 603 form a helical membrane-spanning segment. Residues lysine 604–serine 634 lie on the Cytoplasmic side of the membrane. A helical transmembrane segment spans residues leucine 635–methionine 655. At aspartate 656–aspartate 657 the chain is on the periplasmic side. Residues valine 658 to methionine 678 traverse the membrane as a helical segment. The Cytoplasmic segment spans residues cysteine 679–arginine 692. Residues leucine 693 to glycine 713 traverse the membrane as a helical segment. Over tyrosine 714–threonine 728 the chain is Periplasmic. Residues valine 729–alanine 749 form a helical membrane-spanning segment. Topologically, residues alanine 750 to leucine 796 are cytoplasmic. Residues leucine 797 to phenylalanine 817 traverse the membrane as a helical segment. Over serine 818–lysine 839 the chain is Periplasmic. Residues asparagine 840–isoleucine 860 traverse the membrane as a helical segment. The Cytoplasmic portion of the chain corresponds to arginine 861 to threonine 886. A helical transmembrane segment spans residues threonine 887–valine 907. The Periplasmic portion of the chain corresponds to serine 908–valine 921. Residues glycine 922 to phenylalanine 942 form a helical membrane-spanning segment. At glutamate 943–glycine 1120 the chain is on the cytoplasmic side. Positions tyrosine 1057–glutamate 1081 form a coiled coil.

This sequence belongs to the MscS (TC 1.A.23) family.

Its subcellular location is the cell inner membrane. Functionally, mechanosensitive channel that opens in response to membrane tension and specific ionic conditions. Requires high concentrations of external K(+), NH(4)(+), Rb(+) or Cs(+) to gate. May participate in the regulation of osmotic pressure changes within the cell, although it does not appear to have a major role in osmolarity regulation. Forms an ion channel of 1.0 nanosiemens conductance. The channel can remain active for between 30 seconds and over 3 minutes; it does not desensitize upon extended pressure. Its activity is masked in wild-type cells by the MscS channel. In Escherichia coli (strain K12), this protein is Mechanosensitive channel MscK (mscK).